The following is a 144-amino-acid chain: uncharacterized protein (144 aa).

This is an uncharacterized protein from Escherichia coli O157:H7.